Reading from the N-terminus, the 112-residue chain is Protein Churchill (112 aa).

11 residues coordinate Zn(2+): cysteine 2, cysteine 5, cysteine 30, cysteine 33, histidine 59, cysteine 61, cysteine 64, histidine 66, histidine 71, cysteine 88, and cysteine 91.

It belongs to the Churchill family.

Functionally, transcriptional activator that mediates FGF signaling during neural development. Plays a role in the regulation of cell movement. Does not bind DNA by itself. The protein is Protein Churchill (CHURC1) of Bos taurus (Bovine).